We begin with the raw amino-acid sequence, 372 residues long: DNA double-strand break repair protein Mre11 (372 aa).

Positions 8, 10, 49, and 84 each coordinate Mn(2+). The active-site Proton donor is His-85. Residues His-161, His-190, and His-192 each contribute to the Mn(2+) site.

The protein belongs to the MRE11/RAD32 family. As to quaternary structure, homodimer. Forms a heterotetramer composed of two Mre11 subunits and two Rad50 subunits. Requires Mn(2+) as cofactor.

Its activity is regulated as follows. Nuclease activity is regulated by Rad50. Part of the Rad50/Mre11 complex, which is involved in the early steps of DNA double-strand break (DSB) repair. The complex may facilitate opening of the processed DNA ends to aid in the recruitment of HerA and NurA. Mre11 binds to DSB ends and has both double-stranded 3'-5' exonuclease activity and single-stranded endonuclease activity. In Methanococcus maripaludis (strain DSM 14266 / JCM 13030 / NBRC 101832 / S2 / LL), this protein is DNA double-strand break repair protein Mre11.